The primary structure comprises 588 residues: Myc box-dependent-interacting protein 1 (588 aa).

Alanine 2 is subject to N-acetylalanine. The interaction with BIN2 stretch occupies residues 2 to 122; it reads AEMGSKGVTA…DYHQKLVDQA (121 aa). Coiled-coil stretches lie at residues 15-42 and 193-274; these read ASNVQKKLTRAQEKVLQKLGKADETKDE and HLVA…EKQH. Residues 29–276 form the BAR domain; that stretch reads VLQKLGKADE…LVSLEKQHGS (248 aa). The segment at 279–355 is disordered; sequence FTVKAQPSDS…PKHTPSKEMK (77 aa). 3 positions are modified to phosphoserine: serine 296, serine 298, and serine 304. The residue at position 308 (threonine 308) is a Phosphothreonine. Residues serine 324 and serine 332 each carry the phosphoserine modification. The interval 379-422 is clathrin-binding; that stretch reads FEAPGPFSEQASLLDLDFEPLPPVASPVKAPTPSGQSIPWDLWE. Positions 448–483 are disordered; the sequence is PSQTAEPGPAQPAEASEVVGGTQEPGETAASEATSS. Low complexity predominate over residues 474-483; that stretch reads ETAASEATSS. The SH3 domain maps to 515-588; the sequence is GFMFKVQAQH…FPENFTERVQ (74 aa).

As to quaternary structure, heterodimer with AMPH. Binds SH3GLB1. Interacts (via SH3 domain) with DNM1. Interacts with SYNJ1. Interacts (via SH3 domain) with DNM2. Interacts with CLTC. Interacts with AP2A2. Interacts with AP2B1. Interacts with MYC (via N-terminal transactivation domain); the interaction requires the integrity of the conserved MYC box regions 1 and 2. Interacts with BIN2. Interacts with SNX4. Interacts (via BAR domain) with BACE1. Binds (via BAR domain) F-actin. Post-translationally, phosphorylated by protein kinase C. As to expression, highly expressed in the brain and muscle. Isoform AMPH2-1 is expressed only in the brain where it is concentrated in axon initial segments and nodes of Ranvier. Isoform AMPH2-2 is widely expressed.

It localises to the nucleus. It is found in the cytoplasm. The protein localises to the endosome. The protein resides in the cell membrane. Its subcellular location is the sarcolemma. It localises to the T-tubule. Its function is as follows. Is a key player in the control of plasma membrane curvature, and membrane shaping and remodeling. Required in muscle cells for the formation of T-tubules, tubular invaginations of the plasma membrane that function in depolarization-contraction coupling. Required in muscle cells for the formation of T-tubules, tubular invaginations of the plasma membrane that function in depolarization-contraction coupling. Is a negative regulator of endocytosis. Is also involved in the regulation of intracellular vesicles sorting, modulation of BACE1 trafficking and the control of amyloid-beta production. In neuronal circuits, endocytosis regulation may influence the internalization of PHF-tau aggregates. May be involved in the regulation of MYC activity and the control cell proliferation. The chain is Myc box-dependent-interacting protein 1 (Bin1) from Rattus norvegicus (Rat).